The following is a 634-amino-acid chain: MSETVSQNKETRGFQSEVKQLLHLMIHSLYSNKEIFLRELISNASDASDKLRFQALSNPDLYEGNADLGVKLSFDESANTLTISDNGIGMSRNDVIEHLGTIAKSGTAEFFSKLSEEQSKDSQLIGQFGVGFYSAFIVADAVTVRTRAAGLPADEAVQWHSAGEGEYTIENITKESRGTDIILHMRDEGKEFLNEWRLRDVISKYSDHIGIPVSIQTVVRDEDGKETDEKKWEQINKAQALWTRNKADISDEEYQEFYKHVSHDFADPLVWSHNRVEGKNDYTSLLYIPSKAPWDMMNRDHKSGLKLYVQRVFIMDDAEQFMPSYLRFVRGLIDSNDLPLNVSREILQDNKVTQSLRNACTKRVLTMLERMAKNDEEKYQSFWKEFGLVLKEGPAEDFANKEKIAGLLRFASTEVDSAEQTVGLASYVERMKEGQDKIYYLTADSYAAAKNSPHLEQFKAKGIEVILMFDRIDEWLMNYLTEFDGKQFQSITKAGLDLSKFEDEADKEKQKETEEEFKSVVERTKSYLGDRVKDVRTTFKLASTPAVVVTDDYEMGTQMAKLLAAAGQAVPEVKYIFEINPEHELVKRMADEADEEAFGRWVEVLLGQAMLAERGSMEDPTQFLGAINKLLTKV.

The segment at 1–344 (MSETVSQNKE…SNDLPLNVSR (344 aa)) is a; substrate-binding. The tract at residues 345-561 (EILQDNKVTQ…DYEMGTQMAK (217 aa)) is b. A c region spans residues 562 to 634 (LLAAAGQAVP…GAINKLLTKV (73 aa)).

Belongs to the heat shock protein 90 family. As to quaternary structure, homodimer.

The protein localises to the cytoplasm. Molecular chaperone. Has ATPase activity. This chain is Chaperone protein HtpG, found in Vibrio parahaemolyticus serotype O3:K6 (strain RIMD 2210633).